The following is a 224-amino-acid chain: Serum amyloid P-component (224 aa).

The first 19 residues, 1-19 (MERLLLWVSVLASLPEAFA), serve as a signal peptide directing secretion. Residues 24–224 (TGKVFVFPRE…YVVIKPRVWS (201 aa)) form the Pentraxin (PTX) domain. Asn51 carries an N-linked (GlcNAc...) asparagine glycan. Cys55 and Cys114 are joined by a disulfide. Ca(2+) is bound by residues Asp77, Asn78, Glu155, Gln156, Asp157, and Gln167.

The protein belongs to the pentraxin family. Homopentamer. Pentraxin (or pentaxin) have a discoid arrangement of 5 non-covalently bound subunits. It depends on Ca(2+) as a cofactor.

The protein localises to the secreted. This Sus scrofa (Pig) protein is Serum amyloid P-component (APCS).